The primary structure comprises 722 residues: Ras and EF-hand domain-containing protein (722 aa).

EF-hand domains lie at 5 to 39 and 39 to 74; these read DELSRLRALFHTFDSKSSGRLEKGQFSALCAELKV and VSPSEAEDIFARLDSDKDSCITFEDFAMGFRGARGL. The span at 75–84 shows a compositional bias: basic and acidic residues; that stretch reads HMPEGKKDVE. Positions 75 to 109 are disordered; the sequence is HMPEGKKDVEQGEPPKSPSTPDKEEKPEETSSPAW. Residues 156-335 are a coiled coil; the sequence is REIRLQSTEM…ANRKLHDSND (180 aa). Residues 355-374 show a composition bias toward polar residues; it reads INTSPGSTISRNSPKLTRCT. Disordered stretches follow at residues 355 to 384 and 439 to 491; these read INTSPGSTISRNSPKLTRCTSPYDRSPRSS and FHRS…SGAS. Positions 480–491 are enriched in low complexity; the sequence is SNPVSRSSSGAS. Residues 532–537, 635–638, and 672–673 each bind GTP; these read AVGKSS, NKAD, and AK.

It belongs to the small GTPase superfamily. Rab family. Homodimer.

The protein localises to the cytoplasm. It localises to the perinuclear region. Its function is as follows. Binds predominantly GDP, and also GTP. This Xenopus tropicalis (Western clawed frog) protein is Ras and EF-hand domain-containing protein (rasef).